The primary structure comprises 152 residues: UPF0266 membrane protein YobD (152 aa).

3 consecutive transmembrane segments (helical) span residues 6 to 26, 45 to 65, and 67 to 87; these read LVLILFIAALLAFAIYDQFIM, IDSVIFVGLIVILIYNNVTNH, and ALITTWLLSALALMGFYIFWI.

It belongs to the UPF0266 family.

It is found in the cell inner membrane. This is UPF0266 membrane protein YobD from Shigella dysenteriae serotype 1 (strain Sd197).